Consider the following 164-residue polypeptide: MAGISQHGKAFIRPKAKAHLLIVEARFHDDLADALLDGATSALEEAGATYDVVTVPGSLEIPAVITFALDGAAEGGTNYDGFVALGTIIRGDTYHFDIVANESSRALMDMSVQDSVCIGNGILTTENDAQAWTRAKRSEGDKGGFAARAALTMIALKEQLGARS.

Residues Phe27, 58–60, and 87–89 each bind 5-amino-6-(D-ribitylamino)uracil; these read SLE and TII. A (2S)-2-hydroxy-3-oxobutyl phosphate-binding site is contributed by 92 to 93; it reads DT. Residue His95 is the Proton donor of the active site. Asn120 lines the 5-amino-6-(D-ribitylamino)uracil pocket. Arg134 contributes to the (2S)-2-hydroxy-3-oxobutyl phosphate binding site.

The protein belongs to the DMRL synthase family. Homopentamer.

The catalysed reaction is (2S)-2-hydroxy-3-oxobutyl phosphate + 5-amino-6-(D-ribitylamino)uracil = 6,7-dimethyl-8-(1-D-ribityl)lumazine + phosphate + 2 H2O + H(+). It functions in the pathway cofactor biosynthesis; riboflavin biosynthesis; riboflavin from 2-hydroxy-3-oxobutyl phosphate and 5-amino-6-(D-ribitylamino)uracil: step 1/2. Catalyzes the formation of 6,7-dimethyl-8-ribityllumazine by condensation of 5-amino-6-(D-ribitylamino)uracil with 3,4-dihydroxy-2-butanone 4-phosphate. This is the penultimate step in the biosynthesis of riboflavin. The sequence is that of 6,7-dimethyl-8-ribityllumazine synthase 1 (ribH1) from Mesorhizobium japonicum (strain LMG 29417 / CECT 9101 / MAFF 303099) (Mesorhizobium loti (strain MAFF 303099)).